The primary structure comprises 1011 residues: Multiple C2 domain and transmembrane region protein 7 (1011 aa).

The region spanning methionine 1 to phenylalanine 110 is the C2 1 domain. Residues glutamine 178–alanine 195 are compositionally biased toward polar residues. The segment at glutamine 178–histidine 201 is disordered. 3 C2 domains span residues isoleucine 261–tyrosine 381, valine 421–tyrosine 546, and tyrosine 587–tyrosine 709. Aspartate 294, aspartate 300, aspartate 347, aspartate 349, and aspartate 354 together coordinate Ca(2+). The next 3 membrane-spanning stretches (helical) occupy residues methionine 812–tryptophan 832, leucine 846–isoleucine 866, and isoleucine 954–valine 974.

The protein belongs to the MCTP family. The cofactor is Ca(2+). Accumulates specifically in hydathodes. Restricted the basal meristem of roots. Observed in flowers.

It localises to the membrane. It is found in the vesicle. The protein resides in the endosome membrane. Functionally, may function as a signaling molecule by regulating the trafficking of other regulators. The polypeptide is Multiple C2 domain and transmembrane region protein 7 (Arabidopsis thaliana (Mouse-ear cress)).